We begin with the raw amino-acid sequence, 314 residues long: Malate dehydrogenase (314 aa).

9 to 15 (IGVGNVG) is a binding site for NAD(+). Residues Arg84 and Arg90 each contribute to the substrate site. Residues Asn97 and 120-122 (ISN) contribute to the NAD(+) site. Positions 122 and 153 each coordinate substrate. His177 acts as the Proton acceptor in catalysis.

It belongs to the LDH/MDH superfamily.

It carries out the reaction (S)-malate + NAD(+) = oxaloacetate + NADH + H(+). Catalyzes the reversible oxidation of malate to oxaloacetate. The chain is Malate dehydrogenase from Aliarcobacter butzleri (strain RM4018) (Arcobacter butzleri).